The following is a 323-amino-acid chain: UPF0200/UPF0201 protein AF_1395 (323 aa).

A UPF0200 region spans residues 1-185; sequence MVLEMKVIAF…EKIRQILLKL (185 aa). 12–19 serves as a coordination point for ATP; it reads GYPLSGKS. The UPF0201 stretch occupies residues 186–323; it reads AKNVEIEIRT…GRPVKEIDKL (138 aa).

In the N-terminal section; belongs to the UPF0200 family. This sequence in the C-terminal section; belongs to the UPF0201 family.

The chain is UPF0200/UPF0201 protein AF_1395 from Archaeoglobus fulgidus (strain ATCC 49558 / DSM 4304 / JCM 9628 / NBRC 100126 / VC-16).